The primary structure comprises 33 residues: Cytochrome b6-f complex subunit 8 (33 aa).

Residues 2–22 (LFTVAWASLAAMFSFSIAMVV) traverse the membrane as a helical segment.

It belongs to the PetN family. In terms of assembly, the 4 large subunits of the cytochrome b6-f complex are cytochrome b6, subunit IV (17 kDa polypeptide, PetD), cytochrome f and the Rieske protein, while the 4 small subunits are PetG, PetL, PetM and PetN. The complex functions as a dimer.

Its subcellular location is the cellular thylakoid membrane. Functionally, component of the cytochrome b6-f complex, which mediates electron transfer between photosystem II (PSII) and photosystem I (PSI), cyclic electron flow around PSI, and state transitions. In Parasynechococcus marenigrum (strain WH8102), this protein is Cytochrome b6-f complex subunit 8.